A 157-amino-acid chain; its full sequence is Transcription factor HES-2 (157 aa).

Residues 13–70 (LRKNLKPLLEKRRRARINESLSQLKGLVLPLLGAETSRSSKLEKADILEMTVRFLQEQ) form the bHLH domain. The 34-residue stretch at 86–119 (YLEGYRACLARLARVLPACSVLEPAVSARLLEHL) folds into the Orange domain. A disordered region spans residues 124–157 (VSDDSPSLTLPPAPAPAPSPPVPPPGSSGLWRPW). Residues 132–149 (TLPPAPAPAPSPPVPPPG) are compositionally biased toward pro residues. The WRPW motif signature appears at 154–157 (WRPW).

In terms of assembly, transcription repression requires formation of a complex with a corepressor protein of the Groucho/TLE family.

It is found in the nucleus. Transcriptional repressor of genes that require a bHLH protein for their transcription. The protein is Transcription factor HES-2 (Hes2) of Mus musculus (Mouse).